The sequence spans 542 residues: Propane 2-monooxygenase, hydroxylase component large subunit (542 aa).

Glu97, Glu127, His130, Glu192, Glu226, and His229 together coordinate Fe cation.

The protein belongs to the TmoA/XamoA family. The propane 2-monooxygenase multicomponent enzyme system is composed of an electron transfer component and a monooxygenase component interacting with the effector protein MimD. The electron transfer component is composed of a reductase (MimB), and the monooxygenase component is formed by a large subunit (MimA) and a small subunit (MimC). Requires the presence of the chaperonin-like protein MimG to ensure a productive folding, resulting of a soluble MimA, which leads to the active form of MimABCD. The cofactor is Fe(2+).

It catalyses the reaction propane + NADH + O2 + H(+) = propan-2-ol + NAD(+) + H2O. It carries out the reaction acetone + NADH + O2 + H(+) = hydroxyacetone + NAD(+) + H2O. The enzyme catalyses butan-2-one + NADH + O2 + H(+) = 1-hydroxy-2-butanone + NAD(+) + H2O. The catalysed reaction is phenol + NADH + O2 + H(+) = hydroquinone + NAD(+) + H2O. Its function is as follows. Component of the propane 2-monooxygenase multicomponent enzyme system which is involved in the degradation of propane via the O2-dependent hydroxylation of propane. Also involved in the degradation of acetone via the O2-dependent hydroxylation of acetone. Also able to catalyze the oxidation of phenol, methylethylketone (2-butanone), 1-propanol and 2-propanol. In Mycolicibacterium smegmatis (strain ATCC 700084 / mc(2)155) (Mycobacterium smegmatis), this protein is Propane 2-monooxygenase, hydroxylase component large subunit.